The following is a 202-amino-acid chain: Hypoxanthine-guanine phosphoribosyltransferase (202 aa).

Positions 66 and 67 each coordinate diphosphate. 2 residues coordinate Mg(2+): Glu122 and Asp123. Catalysis depends on Asp126, which acts as the Proton acceptor. Residues Lys154, Phe175–Val176, and Asp182 contribute to the GMP site. Position 188 (Arg188) interacts with diphosphate.

The protein belongs to the purine/pyrimidine phosphoribosyltransferase family. The cofactor is Mg(2+).

It is found in the cytoplasm. The catalysed reaction is IMP + diphosphate = hypoxanthine + 5-phospho-alpha-D-ribose 1-diphosphate. It carries out the reaction GMP + diphosphate = guanine + 5-phospho-alpha-D-ribose 1-diphosphate. It participates in purine metabolism; IMP biosynthesis via salvage pathway; IMP from hypoxanthine: step 1/1. The protein operates within purine metabolism; GMP biosynthesis via salvage pathway; GMP from guanine: step 1/1. Functionally, purine salvage pathway enzyme that catalyzes the transfer of the ribosyl-5-phosphate group from 5-phospho-alpha-D-ribose 1-diphosphate (PRPP) to the N9 position of the 6-oxopurines hypoxanthine and guanine to form the corresponding ribonucleotides IMP (inosine 5'-monophosphate) and GMP (guanosine 5'-monophosphate), with the release of PPi. This Mycobacterium tuberculosis (strain CDC 1551 / Oshkosh) protein is Hypoxanthine-guanine phosphoribosyltransferase (hpt).